The sequence spans 335 residues: Phosphate acyltransferase (335 aa).

This sequence belongs to the PlsX family. As to quaternary structure, homodimer. Probably interacts with PlsY.

The protein localises to the cytoplasm. It carries out the reaction a fatty acyl-[ACP] + phosphate = an acyl phosphate + holo-[ACP]. It functions in the pathway lipid metabolism; phospholipid metabolism. Catalyzes the reversible formation of acyl-phosphate (acyl-PO(4)) from acyl-[acyl-carrier-protein] (acyl-ACP). This enzyme utilizes acyl-ACP as fatty acyl donor, but not acyl-CoA. In Clostridium botulinum (strain ATCC 19397 / Type A), this protein is Phosphate acyltransferase.